Consider the following 406-residue polypeptide: L-methionine gamma-lyase (406 aa).

Pyridoxal 5'-phosphate contacts are provided by residues 76–78 and 106–107; these read YQR and GM. Y132 is an L-homocysteine binding site. 219 to 221 provides a ligand contact to pyridoxal 5'-phosphate; sequence SAT. K222 carries the N6-(pyridoxal phosphate)lysine modification. An L-homocysteine-binding site is contributed by R380. R380 contacts L-methionine.

Belongs to the trans-sulfuration enzymes family. L-methionine gamma-lyase subfamily. In terms of assembly, homotetramer. Pyridoxal 5'-phosphate serves as cofactor.

It catalyses the reaction L-methionine + H2O = methanethiol + 2-oxobutanoate + NH4(+). It carries out the reaction L-homocysteine + H2O = 2-oxobutanoate + hydrogen sulfide + NH4(+) + H(+). Its activity is regulated as follows. Is inhibited in vitro by carbonyl reagents, completely inactivated by DL-propargylglycine, and unaffected by metal-chelating agents. In terms of biological role, catalyzes the alpha,gamma-elimination of L-methionine to produce methanethiol, 2-oxobutanoate and ammonia. May be responsible for the production of methanethiol associated with desirable Cheddar-type sulfur notes during cheese ripening. Is also able to catalyze the alpha,gamma-elimination of L-homocysteine and DL-selenomethionine, but has no activity toward L-cysteine, L-cystathionine, S-adenosyl-L-homocysteine and D-methionine. The chain is L-methionine gamma-lyase from Brevibacterium aurantiacum.